Reading from the N-terminus, the 469-residue chain is 1-aminocyclopropane-1-carboxylate synthase 3 (469 aa).

Residue Lys272 is modified to N6-(pyridoxal phosphate)lysine. A disordered region spans residues 432–452 (APNATNHQNQQQSNANSKKKS). Positions 437 to 447 (NHQNQQQSNAN) are enriched in low complexity.

The protein belongs to the class-I pyridoxal-phosphate-dependent aminotransferase family. Homodimer. Requires pyridoxal 5'-phosphate as cofactor.

The enzyme catalyses S-adenosyl-L-methionine = 1-aminocyclopropane-1-carboxylate + S-methyl-5'-thioadenosine + H(+). Its pathway is alkene biosynthesis; ethylene biosynthesis via S-adenosyl-L-methionine; ethylene from S-adenosyl-L-methionine: step 1/2. In terms of biological role, catalyzes the formation of 1-aminocyclopropane-1-carboxylate, a direct precursor of ethylene in higher plants. The chain is 1-aminocyclopropane-1-carboxylate synthase 3 (ACS3) from Solanum lycopersicum (Tomato).